The sequence spans 397 residues: MFQKVDAYAGDPILTLMERFKEDPRSDKVNLSIGLYYNEDGIIPQLQAVAEAEARLNAQPHGASLYLPMEGLNCYRHAIAPLLFGADHPVLKQQRVATIQTLGGSGALKVGADFLKRYFPESGVWVSDPTWENHVAIFAGAGFEVSTYPWYDEATNGVRFNDLLATLKTLPARSIVLLHPCCHNPTGADLTNDQWDAVIEILKARELIPFLDIAYQGFGAGMEEDAYAIRAIASAGLPALVSNSFSKIFSLYGERVGGLSVMCEDAEAAGRVLGQLKATVRRNYSSPPNFGAQVVAAVLNDEALKASWLAEVEEMRTRILAMRQELVKVLSTEMPERNFDYLLNQRGMFSYTGLSAAQVDRLREEFGVYLIASGRMCVAGLNTANVQRVAKAFAAVM.

The substrate site is built by glycine 34, tyrosine 66, tryptophan 131, and asparagine 184. Lysine 247 bears the N6-(pyridoxal phosphate)lysine mark. Substrate-binding residues include arginine 281 and arginine 375.

The protein belongs to the class-I pyridoxal-phosphate-dependent aminotransferase family. In terms of assembly, homodimer. It depends on pyridoxal 5'-phosphate as a cofactor.

The protein resides in the cytoplasm. The catalysed reaction is an aromatic L-alpha-amino acid + 2-oxoglutarate = an aromatic oxo-acid + L-glutamate. It catalyses the reaction (3S)-3-methyl-L-phenylalanine + 2-oxoglutarate = (3S)-2-oxo-3-phenylbutanoate + L-glutamate. The protein operates within amino-acid biosynthesis; L-phenylalanine biosynthesis; L-phenylalanine from phenylpyruvate (ArAT route): step 1/1. It functions in the pathway amino-acid biosynthesis; L-tyrosine biosynthesis; L-tyrosine from (4-hydroxyphenyl)pyruvate: step 1/1. Its function is as follows. Broad-specificity enzyme that catalyzes the transamination of 2-ketoisocaproate, p-hydroxyphenylpyruvate, and phenylpyruvate to yield leucine, tyrosine, and phenylalanine, respectively. In vitro, is able to catalyze the conversion of beta-methyl phenylpyruvate to the nonproteinogenic amino acid (2S,3S)-beta-methyl-phenylalanine, a building block of the antibiotic mannopeptimycin produced by Streptomyces hygroscopicus NRRL3085. The chain is Aromatic-amino-acid aminotransferase (tyrB) from Escherichia coli (strain K12).